The primary structure comprises 425 residues: Tyrosine--tRNA ligase (425 aa).

Tyr34 contacts L-tyrosine. A 'HIGH' region motif is present at residues 39–48 (PTADSLHVGN). Tyr171 and Gln175 together coordinate L-tyrosine. The short motif at 231-235 (KYGKS) is the 'KMSKS' region element. Residue Lys234 participates in ATP binding. One can recognise an S4 RNA-binding domain in the interval 358-424 (APLVELLVHA…GKRTYTVVKI (67 aa)).

This sequence belongs to the class-I aminoacyl-tRNA synthetase family. TyrS type 1 subfamily. In terms of assembly, homodimer.

The protein resides in the cytoplasm. It catalyses the reaction tRNA(Tyr) + L-tyrosine + ATP = L-tyrosyl-tRNA(Tyr) + AMP + diphosphate + H(+). Functionally, catalyzes the attachment of tyrosine to tRNA(Tyr) in a two-step reaction: tyrosine is first activated by ATP to form Tyr-AMP and then transferred to the acceptor end of tRNA(Tyr). The protein is Tyrosine--tRNA ligase of Opitutus terrae (strain DSM 11246 / JCM 15787 / PB90-1).